A 324-amino-acid chain; its full sequence is Acetyl-coenzyme A carboxylase carboxyl transferase subunit alpha (324 aa).

One can recognise a CoA carboxyltransferase C-terminal domain in the interval 37–291 (KLEKRLDKLK…REFIIQEWLR (255 aa)).

The protein belongs to the AccA family. In terms of assembly, acetyl-CoA carboxylase is a heterohexamer composed of biotin carboxyl carrier protein (AccB), biotin carboxylase (AccC) and two subunits each of ACCase subunit alpha (AccA) and ACCase subunit beta (AccD).

It is found in the cytoplasm. It carries out the reaction N(6)-carboxybiotinyl-L-lysyl-[protein] + acetyl-CoA = N(6)-biotinyl-L-lysyl-[protein] + malonyl-CoA. It participates in lipid metabolism; malonyl-CoA biosynthesis; malonyl-CoA from acetyl-CoA: step 1/1. Functionally, component of the acetyl coenzyme A carboxylase (ACC) complex. First, biotin carboxylase catalyzes the carboxylation of biotin on its carrier protein (BCCP) and then the CO(2) group is transferred by the carboxyltransferase to acetyl-CoA to form malonyl-CoA. This chain is Acetyl-coenzyme A carboxylase carboxyl transferase subunit alpha, found in Chlamydia pneumoniae (Chlamydophila pneumoniae).